The following is a 122-amino-acid chain: Large ribosomal subunit protein uL14c (122 aa).

It belongs to the universal ribosomal protein uL14 family. As to quaternary structure, part of the 50S ribosomal subunit.

It localises to the plastid. Its subcellular location is the chloroplast. Functionally, binds to 23S rRNA. The chain is Large ribosomal subunit protein uL14c from Platanus occidentalis (Sycamore).